The primary structure comprises 158 residues: Pyruvoyl-dependent arginine decarboxylase (158 aa).

S44 carries the pyruvic acid (Ser) modification.

It belongs to the PdaD family. The cofactor is pyruvate.

The enzyme catalyses L-arginine + H(+) = agmatine + CO2. This is Pyruvoyl-dependent arginine decarboxylase from Pyrococcus furiosus (strain ATCC 43587 / DSM 3638 / JCM 8422 / Vc1).